We begin with the raw amino-acid sequence, 1508 residues long: uncharacterized protein (1508 aa).

Positions 149–267 (ARRQQWRLRR…ARSLQEHRAT (119 aa)) form a coiled coil. Disordered regions lie at residues 248–268 (ERSEREREEAARSLQEHRATE), 345–403 (SQDW…LAGS), 536–575 (FLKKHPKDLKDTWNNGGGSLAGRTEEGKARGTLGRKGKNL), 725–754 (GLEEEDEMPHQEASGLGCRGAPEEPDSQEH), and 868–916 (EAKS…AEPW). The segment covering 868–881 (EAKSKESGEGDKPG) has biased composition (basic and acidic residues). A coiled-coil region spans residues 972–1034 (ISRLERDNHR…KGNLGQLQKA (63 aa)). Disordered regions lie at residues 1158–1186 (LAAGQTGPSTGTGNSRRGADSPPPSLVWR) and 1204–1246 (KEAH…EEDP). Over residues 1163-1172 (TGPSTGTGNS) the composition is skewed to polar residues. The segment covering 1204 to 1215 (KEAHLEKEEKRP) has biased composition (basic and acidic residues). The span at 1220–1230 (AQGQALSSLSN) shows a compositional bias: polar residues. Positions 1271–1302 (HQASLDEATRLQEELQAKLEELQKKQHEAKLA) form a coiled coil.

This is an uncharacterized protein from Homo sapiens (Human).